The sequence spans 8797 residues: Nesprin-1 (8797 aa).

The segment at 1–289 (MATSRGASRC…KHYPDIHNAS (289 aa)) is actin-binding. The Cytoplasmic portion of the chain corresponds to 1–8746 (MATSRGASRC…GRGFLFRVLR (8746 aa)). 2 Calponin-homology (CH) domains span residues 27–134 (IVQK…LYFQ) and 178–283 (GNAK…KHYP). Spectrin repeat units follow at residues 314–397 (REDR…SRLF), 398–502 (DWHI…HLMK), 503–609 (MEFL…SMLE), 610–703 (EVIS…YAQA), 704–815 (DEMD…QLLI), 816–923 (PLEE…KHVE), 924–1024 (TNSR…HLKI), 1025–1122 (DVEK…LMED), 1123–1246 (PDKW…NSLE), 1247–1335 (ELIS…ERRI), 1336–1444 (QVTL…MEMV), 1445–1550 (KTKW…ILGH), 1551–1653 (LSQQ…LENL), 1654–1763 (LAHW…LQSV), 1764–1879 (VAEH…SHAS), 1880–1976 (LSGI…ADAL), 1977–2081 (AVLK…QGQC), 2082–2195 (CGLI…LRVS), 2196–2303 (LSIW…KDFT), 2304–2401 (AQST…KTQA), 2402–2513 (SLQE…LQDC), 2514–2619 (ASEL…LRSC), 2620–2731 (QVAL…LESV), 2732–2838 (ISQW…VEEI), 2839–2962 (VKDH…SGQV), 2963–3062 (AQLE…QNKE), 3063–3171 (QILQ…LENL), 3172–3275 (KIQM…VSRL), 3276–3387 (DRIV…LEGA), 3388–3490 (LSKW…SEKL), 3491–3593 (VRLH…RTQF), 3594–3720 (NNVV…YSDW), 3721–3814 (YGST…LEKG), 3815–3920 (LHLA…LEAK), 3921–4028 (VKDH…QRMY), 4029–4139 (QSLE…KHLK), 4140–4235 (SELW…REED), 4236–4339 (LQRT…IQVS), 4340–4451 (VTNL…LNKA), 4452–4560 (LSEK…LEKN), 4561–4669 (LVSR…VQEA), 4670–4776 (ILAR…LEDT), 4777–4882 (TSAY…CESR), 4883–4991 (MVQS…LTEI), 4992–5099 (YSQC…LQRC), 5100–5209 (TAQW…LEDA), 5210–5318 (VDEW…GKLV), 5319–5424 (KQEL…EQSK), 5425–5522 (ATSQ…LSKL), 5523–5630 (NQAA…LQDA), 5631–5736 (AKDM…MQEA), and 5737–5842 (VVQY…PSAH). Residues 314-8666 (REDRVIFKEM…EKLLDVSSSQ (8353 aa)) adopt a coiled-coil conformation. S732 is subject to Phosphoserine. T2270 is subject to Phosphothreonine. The residue at position 5657 (S5657) is a Phosphoserine. The disordered stretch occupies residues 5859 to 5886 (PVTEESGEEGTNSEISSPPACRSPSPVA). Spectrin repeat units follow at residues 5962 to 6071 (LERQ…LEEK), 6072 to 6178 (LNDQ…SLLE), 6374 to 6485 (RQSI…RLQQ), 6486 to 6581 (ILNF…RSGL), 6582 to 6691 (NQNL…LETW), 6692 to 6795 (SHLD…TILK), 6796 to 6902 (HWTR…QEKL), 6903 to 7020 (HQLQ…LEGL), 7021 to 7128 (LESW…LKSV), 7129 to 7237 (LDQW…SKAL), 7238 to 7350 (LQLW…LQAG), 7351 to 7454 (VLDY…LQSF), 7455 to 7558 (LLQH…RGII), 7559 to 7671 (DSQI…LAFL), 7672 to 7783 (LKDW…NEWA), 7784 to 7883 (VFSE…LKET), 7884 to 7997 (LVAV…IEET), 7998 to 8106 (WRLW…LKHF), and 8107 to 8216 (IGQR…LPLP). S8223 carries the post-translational modification Phosphoserine. The tract at residues 8246 to 8279 (DSLLSPQPSSNLSLSLAQPLRSERSGRDTPASVD) is disordered. The segment covering 8247-8265 (SLLSPQPSSNLSLSLAQPL) has biased composition (low complexity). Position 8274 is a phosphothreonine (T8274). A phosphoserine mark is found at S8277, S8280, and S8305. Spectrin repeat units lie at residues 8329-8438 (SALE…MKQN), 8439-8548 (LQKW…LQDA), and 8549-8666 (LMQC…SSSQ). Residue T8360 is modified to Phosphothreonine. The segment at 8671-8734 (SWSSADELDT…DSSLSEPGPG (64 aa)) is disordered. 2 stretches are compositionally biased toward polar residues: residues 8680–8696 (TSGSVSPTSGRSTPNRQ) and 8704–8729 (SLSQPGPSVSSPHSRSTKGGSDSSLS). One can recognise a KASH domain in the interval 8738 to 8797 (RGFLFRVLRAALPLQLLLLLLIGLACLVPMSEEDYSCALSNNFARSFHPMLRYTNGPPPL). Residues 8747–8767 (AALPLQLLLLLLIGLACLVPM) form a helical; Anchor for type IV membrane protein membrane-spanning segment. The Perinuclear space portion of the chain corresponds to 8768-8797 (SEEDYSCALSNNFARSFHPMLRYTNGPPPL).

This sequence belongs to the nesprin family. As to quaternary structure, core component of LINC complexes which are composed of inner nuclear membrane SUN domain-containing proteins coupled to outer nuclear membrane KASH domain-containing nesprins. SUN and KASH domain-containing proteins seem to bind each other promiscuously; however, differentially expression of LINC complex constituents can give rise to specific assemblies. At least SUN1/2-containing core LINC complexes are proposed to be hexameric composed of three protomers of each KASH and SUN domain-containing protein. The SUN2:SYNE1/KASH1 LINC complex is a heterohexamer; the homotrimeric cloverleave-like conformation of the SUN domain is a prerequisite for LINC complex formation in which three separate SYNE1/KASH1 peptides bind at the interface of adjacent SUN domains. Self-associates. Interacts with SYNE3. Interacts with SPAG4/SUN4. May interact with MUSK. Interacts with F-actin via its N-terminal domain. Interacts with EMD and LMNA in vitro. Interacts (via KASH domain) with TMEM258. In terms of processing, the disulfid bond with SUN1 or SUN2 is required for stability of the respective LINC complex under tensile forces. As to expression, expressed in HeLa, A431, A172 and HaCaT cells (at protein level). Widely expressed. Highly expressed in skeletal and smooth muscles, heart, spleen, peripheral blood leukocytes, pancreas, cerebellum, stomach, kidney and placenta. Isoform GSRP-56 is predominantly expressed in heart and skeletal muscle (at protein level).

It localises to the nucleus outer membrane. It is found in the nucleus. The protein resides in the nucleus envelope. The protein localises to the cytoplasm. Its subcellular location is the cytoskeleton. It localises to the myofibril. It is found in the sarcomere. The protein resides in the golgi apparatus. Multi-isomeric modular protein which forms a linking network between organelles and the actin cytoskeleton to maintain the subcellular spatial organization. As a component of the LINC (LInker of Nucleoskeleton and Cytoskeleton) complex involved in the connection between the nuclear lamina and the cytoskeleton. The nucleocytoplasmic interactions established by the LINC complex play an important role in the transmission of mechanical forces across the nuclear envelope and in nuclear movement and positioning. May be involved in nucleus-centrosome attachment and nuclear migration in neural progenitors implicating LINC complex association with SUN1/2 and probably association with cytoplasmic dynein-dynactin motor complexes; SYNE1 and SYNE2 may act redundantly. Required for centrosome migration to the apical cell surface during early ciliogenesis. May be involved in nuclear remodeling during sperm head formation in spermatogenesis; a probable SUN3:SYNE1/KASH1 LINC complex may tether spermatid nuclei to posterior cytoskeletal structures such as the manchette. The protein is Nesprin-1 of Homo sapiens (Human).